Consider the following 259-residue polypeptide: Phosphatidylserine decarboxylase proenzyme (259 aa).

Active-site charge relay system; for autoendoproteolytic cleavage activity residues include Asp-86, His-142, and Ser-226. Ser-226 (schiff-base intermediate with substrate; via pyruvic acid; for decarboxylase activity) is an active-site residue. Ser-226 is subject to Pyruvic acid (Ser); by autocatalysis.

The protein belongs to the phosphatidylserine decarboxylase family. PSD-B subfamily. Prokaryotic type I sub-subfamily. Heterodimer of a large membrane-associated beta subunit and a small pyruvoyl-containing alpha subunit. Requires pyruvate as cofactor. In terms of processing, is synthesized initially as an inactive proenzyme. Formation of the active enzyme involves a self-maturation process in which the active site pyruvoyl group is generated from an internal serine residue via an autocatalytic post-translational modification. Two non-identical subunits are generated from the proenzyme in this reaction, and the pyruvate is formed at the N-terminus of the alpha chain, which is derived from the carboxyl end of the proenzyme. The autoendoproteolytic cleavage occurs by a canonical serine protease mechanism, in which the side chain hydroxyl group of the serine supplies its oxygen atom to form the C-terminus of the beta chain, while the remainder of the serine residue undergoes an oxidative deamination to produce ammonia and the pyruvoyl prosthetic group on the alpha chain. During this reaction, the Ser that is part of the protease active site of the proenzyme becomes the pyruvoyl prosthetic group, which constitutes an essential element of the active site of the mature decarboxylase.

It localises to the cell membrane. The enzyme catalyses a 1,2-diacyl-sn-glycero-3-phospho-L-serine + H(+) = a 1,2-diacyl-sn-glycero-3-phosphoethanolamine + CO2. It functions in the pathway phospholipid metabolism; phosphatidylethanolamine biosynthesis; phosphatidylethanolamine from CDP-diacylglycerol: step 2/2. Functionally, catalyzes the formation of phosphatidylethanolamine (PtdEtn) from phosphatidylserine (PtdSer). This Halalkalibacterium halodurans (strain ATCC BAA-125 / DSM 18197 / FERM 7344 / JCM 9153 / C-125) (Bacillus halodurans) protein is Phosphatidylserine decarboxylase proenzyme.